A 127-amino-acid polypeptide reads, in one-letter code: Fluoride-specific ion channel FluC (127 aa).

A run of 4 helical transmembrane segments spans residues 4-24, 35-55, 71-91, and 103-123; these read LLLA…LLSM, LGTL…FAWF, TGFC…VFLL, and VFVN…LFSA. G75 and T78 together coordinate Na(+).

Belongs to the fluoride channel Fluc/FEX (TC 1.A.43) family.

It localises to the cell inner membrane. The enzyme catalyses fluoride(in) = fluoride(out). Na(+) is not transported, but it plays an essential structural role and its presence is essential for fluoride channel function. Fluoride-specific ion channel. Important for reducing fluoride concentration in the cell, thus reducing its toxicity. The sequence is that of Fluoride-specific ion channel FluC from Shigella flexneri serotype 5b (strain 8401).